Consider the following 575-residue polypeptide: Acetolactate synthase large subunit (575 aa).

Glutamate 57 provides a ligand contact to thiamine diphosphate. FAD contacts are provided by residues arginine 159, 265-286 (HGSY…LGSR), and 308-327 (DIDA…ILSD). Residues 395–475 (QHQMWVAQYY…IKVVLINNHS (81 aa)) are thiamine pyrophosphate binding. Residues aspartate 446 and asparagine 473 each contribute to the Mg(2+) site.

This sequence belongs to the TPP enzyme family. Dimer of large and small chains. Requires Mg(2+) as cofactor. Thiamine diphosphate is required as a cofactor.

The enzyme catalyses 2 pyruvate + H(+) = (2S)-2-acetolactate + CO2. It functions in the pathway amino-acid biosynthesis; L-isoleucine biosynthesis; L-isoleucine from 2-oxobutanoate: step 1/4. The protein operates within amino-acid biosynthesis; L-valine biosynthesis; L-valine from pyruvate: step 1/4. This chain is Acetolactate synthase large subunit (ilvB), found in Lactococcus lactis subsp. lactis (strain IL1403) (Streptococcus lactis).